Reading from the N-terminus, the 106-residue chain is U1-lycotoxin-Ls1z (106 aa).

Positions Met-1–Ser-19 are cleaved as a signal peptide. The propeptide occupies Glu-20 to Arg-40. 4 cysteine pairs are disulfide-bonded: Cys-43–Cys-58, Cys-50–Cys-67, Cys-57–Cys-85, and Cys-69–Cys-83.

This sequence belongs to the neurotoxin 19 (CSTX) family. 03 subfamily. In terms of tissue distribution, expressed by the venom gland.

The protein resides in the secreted. The protein is U1-lycotoxin-Ls1z of Lycosa singoriensis (Wolf spider).